The chain runs to 884 residues: Valine--tRNA ligase (884 aa).

Positions 43–53 (PNVTGSLHIGH) match the 'HIGH' region motif. The short motif at 530–534 (KMSKS) is the 'KMSKS' region element. Lys-533 contacts ATP. Positions 817–884 (VIDLDAERGR…KLKAALERLM (68 aa)) form a coiled coil.

Belongs to the class-I aminoacyl-tRNA synthetase family. ValS type 1 subfamily. In terms of assembly, monomer.

The protein localises to the cytoplasm. The enzyme catalyses tRNA(Val) + L-valine + ATP = L-valyl-tRNA(Val) + AMP + diphosphate. Its function is as follows. Catalyzes the attachment of valine to tRNA(Val). As ValRS can inadvertently accommodate and process structurally similar amino acids such as threonine, to avoid such errors, it has a 'posttransfer' editing activity that hydrolyzes mischarged Thr-tRNA(Val) in a tRNA-dependent manner. This chain is Valine--tRNA ligase, found in Zymomonas mobilis subsp. mobilis (strain ATCC 31821 / ZM4 / CP4).